Consider the following 619-residue polypeptide: Dihydroxy-acid dehydratase (619 aa).

Aspartate 81 contributes to the Mg(2+) binding site. Cysteine 122 is a binding site for [2Fe-2S] cluster. Residues aspartate 123 and lysine 124 each contribute to the Mg(2+) site. At lysine 124 the chain carries N6-carboxylysine. Cysteine 195 serves as a coordination point for [2Fe-2S] cluster. Position 494 (glutamate 494) interacts with Mg(2+). Serine 520 acts as the Proton acceptor in catalysis.

This sequence belongs to the IlvD/Edd family. As to quaternary structure, homodimer. [2Fe-2S] cluster serves as cofactor. Requires Mg(2+) as cofactor.

It carries out the reaction (2R)-2,3-dihydroxy-3-methylbutanoate = 3-methyl-2-oxobutanoate + H2O. The catalysed reaction is (2R,3R)-2,3-dihydroxy-3-methylpentanoate = (S)-3-methyl-2-oxopentanoate + H2O. It participates in amino-acid biosynthesis; L-isoleucine biosynthesis; L-isoleucine from 2-oxobutanoate: step 3/4. It functions in the pathway amino-acid biosynthesis; L-valine biosynthesis; L-valine from pyruvate: step 3/4. Functions in the biosynthesis of branched-chain amino acids. Catalyzes the dehydration of (2R,3R)-2,3-dihydroxy-3-methylpentanoate (2,3-dihydroxy-3-methylvalerate) into 2-oxo-3-methylpentanoate (2-oxo-3-methylvalerate) and of (2R)-2,3-dihydroxy-3-methylbutanoate (2,3-dihydroxyisovalerate) into 2-oxo-3-methylbutanoate (2-oxoisovalerate), the penultimate precursor to L-isoleucine and L-valine, respectively. This chain is Dihydroxy-acid dehydratase, found in Shewanella putrefaciens (strain CN-32 / ATCC BAA-453).